Consider the following 671-residue polypeptide: APC membrane recruitment protein 2 (671 aa).

Disordered regions lie at residues 1 to 24 (METSRSRGGGGAVSERGGAGASVG), 76 to 358 (SGGT…SDPS), 391 to 414 (EAGPSCDKHVPGPGKPALSKKNPG), and 444 to 598 (SQTE…PLRT). Gly residues-rich tracts occupy residues 7-21 (RGGGGAVSERGGAGA) and 126-137 (GGDSGGGGGGRP). S162 is subject to Phosphoserine. The span at 171-182 (GRSENGKGEPVD) shows a compositional bias: basic and acidic residues. 2 positions are modified to phosphoserine: S229 and S233. Composition is skewed to basic and acidic residues over residues 236-260 (CVKEETPRAAREPEEPSQDAPRDPA), 276-286 (APARSCREAEG), and 295-307 (ARGEDAAGHRRAE). The span at 342–353 (APAAPDPASVDP) shows a compositional bias: low complexity. Residues S355 and S358 each carry the phosphoserine modification. The segment covering 447–458 (EEQGPEPQEGAA) has biased composition (low complexity). 2 stretches are compositionally biased toward basic and acidic residues: residues 472–487 (TPKDTRCVEAAKDASS) and 498–514 (IEPHPKEEPKHPEKEQQ).

This sequence belongs to the Amer family. In terms of assembly, interacts with APC.

Its subcellular location is the cell membrane. Functionally, negative regulator of the canonical Wnt signaling pathway involved in neuroectodermal patterning. Acts by specifically binding phosphatidylinositol 4,5-bisphosphate (PtdIns(4,5)P2), translocating to the cell membrane and interacting with key regulators of the canonical Wnt signaling pathway, such as components of the beta-catenin destruction complex. The protein is APC membrane recruitment protein 2 (AMER2) of Homo sapiens (Human).